Here is a 437-residue protein sequence, read N- to C-terminus: MDSRVLESALRALSRYPLCDRCLGRLFARLGRGWSNRERGEAVKRVLVMELHRRVLEGDEAALKTLVSAAPNIGEVARDVVEHLSPGSYREGGPCAVCGGRLESVIASAVEEGYRLLRAYDIERFVVGVRLERGVAMAEEEVKLAAGAGYGESIKAEIRREVGKLLVSRGGVTVDFDSPEATLMVEFPGGGVDIQVNSLLYKARYWKLARNISQAYWPTPEGPRYFSVEQALWPVLKLTGGERLVVHAAGREDVDARMLGSGRPMIVEVKSPRRRRIPLEELEAAANAGGKGLVRFRFETAAKRAEVALYKEETARVRKVYRALVAVEGGVSEVDVEGLRRALEGAVIMQRTPSRVLHRRPDILRRRRLYSLDCSPLEGAPLMECILEAEGGLYIKELVSGDGGRTRPSFAEVLGREAVCIELDVVWVEHEAPAAPG.

The THUMP domain occupies 76–198 (VARDVVEHLS…GGGVDIQVNS (123 aa)). Asp253 serves as the catalytic Nucleophile. Positions 321 and 394 each coordinate substrate.

Belongs to the pseudouridine synthase Pus10 family.

It catalyses the reaction uridine(54) in tRNA = pseudouridine(54) in tRNA. The enzyme catalyses uridine(55) in tRNA = pseudouridine(55) in tRNA. In terms of biological role, responsible for synthesis of pseudouridine from uracil-54 and uracil-55 in the psi GC loop of transfer RNAs. This is tRNA pseudouridine synthase Pus10 from Aeropyrum pernix (strain ATCC 700893 / DSM 11879 / JCM 9820 / NBRC 100138 / K1).